Consider the following 509-residue polypeptide: ATP synthase subunit beta (509 aa).

Residue 167 to 174 (GGAGVGKT) participates in ATP binding. A disordered region spans residues 476–509 (ESLGAKMEDTSGDGAPAQSDSKSDSKGDDADKDA). Over residues 496 to 509 (SKSDSKGDDADKDA) the composition is skewed to basic and acidic residues.

It belongs to the ATPase alpha/beta chains family. As to quaternary structure, F-type ATPases have 2 components, CF(1) - the catalytic core - and CF(0) - the membrane proton channel. CF(1) has five subunits: alpha(3), beta(3), gamma(1), delta(1), epsilon(1). CF(0) has three main subunits: a(1), b(2) and c(9-12). The alpha and beta chains form an alternating ring which encloses part of the gamma chain. CF(1) is attached to CF(0) by a central stalk formed by the gamma and epsilon chains, while a peripheral stalk is formed by the delta and b chains.

The protein localises to the cell membrane. It catalyses the reaction ATP + H2O + 4 H(+)(in) = ADP + phosphate + 5 H(+)(out). Produces ATP from ADP in the presence of a proton gradient across the membrane. The catalytic sites are hosted primarily by the beta subunits. In Mycobacterium sp. (strain KMS), this protein is ATP synthase subunit beta.